A 238-amino-acid polypeptide reads, in one-letter code: VIGGDECNINERNFLVALYEYWSQSFLCGGTLINGEWVLTAAHCDRKHILIYVGVHDRSVQFDKEQRRFPKEKYFFNCRNNFTKWDKDIMLIRLNKPVSYSEHIAPLSLPSSPPIVGSVCRVMGWGTIKSPQETLPDVPHCANINLLDYGVCRTAHPQFRLPATSRILCAGVLEGGIDTCHRDSGGPLICNGEFQGIVSWGDGSCAQPDKPALYSKVFDHLDWIQNIIAGSETVNCPS.

The region spanning 1 to 229 (VIGGDECNIN…HLDWIQNIIA (229 aa)) is the Peptidase S1 domain. Cystine bridges form between C7/C141, C28/C44, C78/C236, C120/C190, C152/C169, and C180/C205. H43 acts as the Charge relay system in catalysis. N-linked (GlcNAc...) asparagine glycosylation is present at N81. Catalysis depends on D88, which acts as the Charge relay system. The active-site Charge relay system is S184.

Belongs to the peptidase S1 family. Snake venom subfamily. In terms of assembly, monomer. As to expression, expressed by the venom gland.

It localises to the secreted. In terms of biological role, thrombin-like snake venom serine protease. Displays a specificity similar to trypsin. Releases only fibrinopeptide A in the conversion of fibrinogen (FGA) to fibrin. Shows coagulant, esterase and amidase activities. Reversibly increases the permeability of the blood brain barrier (BBB) in mice. Induces the barrel rotation syndrome in mice, which is manifested by gyroxin-like, rapid rolling motions. This syndrome may be due to its effect on BBB permeability, and certainly also to other actions affecting endogenous substrates present in the endothelium, nervous tissues or blood. In Crotalus durissus terrificus (South American rattlesnake), this protein is Thrombin-like enzyme gyroxin B2.1.